The chain runs to 66 residues: Muscarinic toxin 4 (66 aa).

Disulfide bonds link cysteine 3-cysteine 24, cysteine 17-cysteine 42, cysteine 46-cysteine 58, and cysteine 59-cysteine 64.

It belongs to the three-finger toxin family. Short-chain subfamily. Aminergic toxin sub-subfamily. Monomer. Expressed by the venom gland.

Its subcellular location is the secreted. Functionally, binds to the muscarinic acetylcholine receptor (CHRM). The protein is Muscarinic toxin 4 of Dendroaspis angusticeps (Eastern green mamba).